The sequence spans 308 residues: MTKTSNSSYLVILYYQYVPIKDPQTFRNQHFKYCESLGLLGRIIVAQEGINGTLSGPKEQIHKYIDQLKQDVRFCNTVFKIENVDAQVFPRLSIKVKPELVNLSLEEKVDLTKDKGAYLAPQEFLQALQEKDVLILDARNDYEYDLGHFRNAVNPNIRHFRDLPNWVKQNTHLLKNKKIVTYCTGGVRCEKFSTFLKKEGFVDVYQLEGGIISYGKHPETQGVLWDGQMYVFDQRIAVTVNQKEHVIVGKDYFDGTPCERYINCSNPQCNKQILCHEHNEHKYLGACSDKCSAHPQNRYLKKHNNKTS.

In terms of domain architecture, Rhodanese spans Gln129–Val223. The active-site Cysteine persulfide intermediate is the Cys183.

This sequence belongs to the TrhO family.

The catalysed reaction is uridine(34) in tRNA + AH2 + O2 = 5-hydroxyuridine(34) in tRNA + A + H2O. Catalyzes oxygen-dependent 5-hydroxyuridine (ho5U) modification at position 34 in tRNAs. The sequence is that of tRNA uridine(34) hydroxylase from Aster yellows witches'-broom phytoplasma (strain AYWB).